The sequence spans 423 residues: Glucose-1-phosphate adenylyltransferase (423 aa).

Alpha-D-glucose 1-phosphate contacts are provided by residues Y108, G173, 188–189 (EK), and S207.

The protein belongs to the bacterial/plant glucose-1-phosphate adenylyltransferase family. As to quaternary structure, homotetramer.

The catalysed reaction is alpha-D-glucose 1-phosphate + ATP + H(+) = ADP-alpha-D-glucose + diphosphate. It participates in glycan biosynthesis; glycogen biosynthesis. Functionally, involved in the biosynthesis of ADP-glucose, a building block required for the elongation reactions to produce glycogen. Catalyzes the reaction between ATP and alpha-D-glucose 1-phosphate (G1P) to produce pyrophosphate and ADP-Glc. In Francisella tularensis subsp. mediasiatica (strain FSC147), this protein is Glucose-1-phosphate adenylyltransferase.